We begin with the raw amino-acid sequence, 501 residues long: MLLQGMRLSQRLHKRHLFASKILTWTTNPAHIRHLHDIRPPASNFNTQESAPIPESPANSPTRPQMAPKPNLKKKNRSLMYSIIGVSIVGLYFWFKSNSRKQKLPLSAQKVWKEAIWQESDKMDFNYKEALRRYIEALDECDRSHVDLLSDDYTRIELKIAEMYEKLNMLEEAQNLYQELLSRFFEALNVPGKVDESERGEVLRKDLRILIKSLEINKDIESGKRKLLQHLLLAQEEILSKSPELKEFFENRKKKLSMVKDINRDPNDDFKTFVSEENIKFDEQGYMILDLEKNSSAWEPFKEEFFTARDLYTAYCLSSKDIAAALSCKITSVEWMVMADMPPGQILLSQANLGSLFYLQAEKLEADLNQLEQKKSKESNQELDMGTYIKAVRFVRKNRDLCLERAQKCYDSVIAFAKRNRKIRFHVKDQLDPSIAQSIALSTYGMGVLSLHEGVLAKAEKLFKDSITMAKETEFNELLAEAEKELEKTTVLKAAKKEGLN.

Over methionine 1 to arginine 77 the chain is Mitochondrial matrix. Residues arginine 39–leucine 72 form a disordered region. A helical membrane pass occupies residues serine 78–phenylalanine 95. At lysine 96–asparagine 501 the chain is on the mitochondrial intermembrane side. 4 TPR repeats span residues glutamine 109–serine 144, threonine 154–alanine 187, glycine 386–asparagine 420, and alanine 440–threonine 473.

Belongs to the MGR3 family. As to quaternary structure, component of the mitochondrial inner membrane i-AAA protease supercomplex composed of MGR1, MGR3 and YME1. With MGR1, forms a subcomplex that binds to YME1 and to substrates to facilitate proteolysis.

It is found in the mitochondrion inner membrane. Functionally, component of the mitochondrial inner membrane i-AAA protease supercomplex, which degrades misfolded mitochondrial proteins. Together with MGR1, functions in an adapter complex that targets substrates to the i-AAA protease for degradation. Required for growth of cells lacking the mitochondrial genome. In Saccharomyces cerevisiae (strain ATCC 204508 / S288c) (Baker's yeast), this protein is Mitochondrial inner membrane i-AAA protease supercomplex subunit MGR3 (MGR3).